The primary structure comprises 443 residues: Ribosomal protein uS12 methylthiotransferase RimO (443 aa).

The region spanning 8–118 (PKVGFVSLGC…VVNAVHEVVP (111 aa)) is the MTTase N-terminal domain. Residues cysteine 17, cysteine 53, cysteine 82, cysteine 151, cysteine 155, and cysteine 158 each coordinate [4Fe-4S] cluster. Positions 137-375 (LTPRHYAYLK…MAHQQAISAA (239 aa)) constitute a Radical SAM core domain. A TRAM domain is found at 378–443 (QLRIGKEIDV…DEYDMWAEPI (66 aa)).

Belongs to the methylthiotransferase family. RimO subfamily. The cofactor is [4Fe-4S] cluster.

It is found in the cytoplasm. It carries out the reaction L-aspartate(89)-[ribosomal protein uS12]-hydrogen + (sulfur carrier)-SH + AH2 + 2 S-adenosyl-L-methionine = 3-methylsulfanyl-L-aspartate(89)-[ribosomal protein uS12]-hydrogen + (sulfur carrier)-H + 5'-deoxyadenosine + L-methionine + A + S-adenosyl-L-homocysteine + 2 H(+). Functionally, catalyzes the methylthiolation of an aspartic acid residue of ribosomal protein uS12. The chain is Ribosomal protein uS12 methylthiotransferase RimO from Pseudomonas putida (strain ATCC 700007 / DSM 6899 / JCM 31910 / BCRC 17059 / LMG 24140 / F1).